A 180-amino-acid polypeptide reads, in one-letter code: Large ribosomal subunit protein uL5 (180 aa).

The protein belongs to the universal ribosomal protein uL5 family. In terms of assembly, part of the 50S ribosomal subunit; part of the 5S rRNA/L5/L18/L25 subcomplex. Contacts the 5S rRNA and the P site tRNA. Forms a bridge to the 30S subunit in the 70S ribosome.

Functionally, this is one of the proteins that bind and probably mediate the attachment of the 5S RNA into the large ribosomal subunit, where it forms part of the central protuberance. In the 70S ribosome it contacts protein S13 of the 30S subunit (bridge B1b), connecting the 2 subunits; this bridge is implicated in subunit movement. Contacts the P site tRNA; the 5S rRNA and some of its associated proteins might help stabilize positioning of ribosome-bound tRNAs. This Heliobacterium modesticaldum (strain ATCC 51547 / Ice1) protein is Large ribosomal subunit protein uL5.